We begin with the raw amino-acid sequence, 152 residues long: SsrA-binding protein (152 aa).

It belongs to the SmpB family.

Its subcellular location is the cytoplasm. Functionally, required for rescue of stalled ribosomes mediated by trans-translation. Binds to transfer-messenger RNA (tmRNA), required for stable association of tmRNA with ribosomes. tmRNA and SmpB together mimic tRNA shape, replacing the anticodon stem-loop with SmpB. tmRNA is encoded by the ssrA gene; the 2 termini fold to resemble tRNA(Ala) and it encodes a 'tag peptide', a short internal open reading frame. During trans-translation Ala-aminoacylated tmRNA acts like a tRNA, entering the A-site of stalled ribosomes, displacing the stalled mRNA. The ribosome then switches to translate the ORF on the tmRNA; the nascent peptide is terminated with the 'tag peptide' encoded by the tmRNA and targeted for degradation. The ribosome is freed to recommence translation, which seems to be the essential function of trans-translation. The chain is SsrA-binding protein from Rickettsia typhi (strain ATCC VR-144 / Wilmington).